The chain runs to 312 residues: Probable deoxyhypusine synthase (312 aa).

Catalysis depends on Lys-285, which acts as the Nucleophile.

The protein belongs to the deoxyhypusine synthase family. The cofactor is NAD(+).

The catalysed reaction is [eIF5A protein]-L-lysine + spermidine = [eIF5A protein]-deoxyhypusine + propane-1,3-diamine. It functions in the pathway protein modification; eIF5A hypusination. Functionally, catalyzes the NAD-dependent oxidative cleavage of spermidine and the subsequent transfer of the butylamine moiety of spermidine to the epsilon-amino group of a specific lysine residue of the eIF-5A precursor protein to form the intermediate deoxyhypusine residue. This chain is Probable deoxyhypusine synthase, found in Saccharolobus islandicus (strain M.16.4 / Kamchatka #3) (Sulfolobus islandicus).